Consider the following 587-residue polypeptide: Folylpolyglutamate synthase, mitochondrial (587 aa).

A mitochondrion-targeting transit peptide spans 1–42 (MSWARSRLCSTLSLAAVSARGATTEGAARRGMSAWPAPQEPG). Residue 106-109 (GKGS) coordinates ATP. Residues S130, E200, and H228 each contribute to the Mg(2+) site. ATP-binding residues include R363 and D377. Phosphoserine is present on S539.

The protein belongs to the folylpolyglutamate synthase family. In terms of assembly, monomer. It depends on a monovalent cation as a cofactor. In terms of tissue distribution, with non-specific probe, highest content in kidney and liver and lowest in spleen, lung and small intestine, and readily detectable in all of the tumors except hepatoma. Isoform 1 and isoform 2 expressed in leukemic cells and isoform 4 and isoform 5 in liver cells. Isoform 1 and isoform 2 exclusively expressed in hepatoma and Lewis lung carcinoma. Isoform 1 and isoform 2 also expressed in bone marrow, small intestine and spleen. Kidney expresses isoform 1, isoform 2, isoform 4 and isoform 5.

It is found in the mitochondrion inner membrane. It localises to the mitochondrion matrix. The protein localises to the cytoplasm. It catalyses the reaction (6S)-5,6,7,8-tetrahydrofolyl-(gamma-L-Glu)(n) + L-glutamate + ATP = (6S)-5,6,7,8-tetrahydrofolyl-(gamma-L-Glu)(n+1) + ADP + phosphate + H(+). It functions in the pathway cofactor biosynthesis; tetrahydrofolylpolyglutamate biosynthesis. Inhibited by ammonium sulfate. Inhibited by pentaglutamate derivative of DDATHF, but isoform 2 is inhibited to a greater extent at lower concentrations of the compound that is isoform 5. Isoform 5 is virtually unaffected by H(4)PteGlu(5) and 5,10-CH(2)-H(4)PteGlu(5) at concentrations that substantially inhibits the activity of isoform 2. Isoform 2 and 5 are equally sensitive to polyglutamates of 10-CHO-H(4)-PteGlu. Functionally, catalyzes conversion of folates to polyglutamate derivatives allowing concentration of folate compounds in the cell and the intracellular retention of these cofactors, which are important substrates for most of the folate-dependent enzymes that are involved in one-carbon transfer reactions involved in purine, pyrimidine and amino acid synthesis. Dihydrofolate, tetrahydrofolate, 5,10-methylenetetrahydrofolate, 10-formyltetrahydrofolate and 5-formyltetrahydrofolate are the best substrates. Folic acid and 5-methyltetrahydrofolate can also act as substrates. This chain is Folylpolyglutamate synthase, mitochondrial (Fpgs), found in Mus musculus (Mouse).